The chain runs to 202 residues: Holliday junction branch migration complex subunit RuvA (202 aa).

The interval 1–64 is domain I; sequence MIDFLKGRLV…ETALEMFGFS (64 aa). Positions 65–143 are domain II; it reads SELDRTAFLL…KQQVAVSAEL (79 aa). The flexible linker stretch occupies residues 144–152; that stretch reads PASDGVPVL. The domain III stretch occupies residues 152–202; the sequence is LAGRAENEALAALISLGYTPREAREALNRLPDRKLDAAGLVHAALRIMGSQ.

Belongs to the RuvA family. In terms of assembly, homotetramer. Forms an RuvA(8)-RuvB(12)-Holliday junction (HJ) complex. HJ DNA is sandwiched between 2 RuvA tetramers; dsDNA enters through RuvA and exits via RuvB. An RuvB hexamer assembles on each DNA strand where it exits the tetramer. Each RuvB hexamer is contacted by two RuvA subunits (via domain III) on 2 adjacent RuvB subunits; this complex drives branch migration. In the full resolvosome a probable DNA-RuvA(4)-RuvB(12)-RuvC(2) complex forms which resolves the HJ.

The protein resides in the cytoplasm. The RuvA-RuvB-RuvC complex processes Holliday junction (HJ) DNA during genetic recombination and DNA repair, while the RuvA-RuvB complex plays an important role in the rescue of blocked DNA replication forks via replication fork reversal (RFR). RuvA specifically binds to HJ cruciform DNA, conferring on it an open structure. The RuvB hexamer acts as an ATP-dependent pump, pulling dsDNA into and through the RuvAB complex. HJ branch migration allows RuvC to scan DNA until it finds its consensus sequence, where it cleaves and resolves the cruciform DNA. The polypeptide is Holliday junction branch migration complex subunit RuvA (Desulforudis audaxviator (strain MP104C)).